We begin with the raw amino-acid sequence, 348 residues long: WD repeat-containing protein JIP5 (348 aa).

7 WD repeats span residues 5–44 (KLKNQPFDVAFHPKEPVVFSSLLTGQVCAWSYDDATGETS), 51–90 (PSKRTARALSIEENGDEIWMGGKSGSLFQLSTRDGSMTRE), 94–132 (AHECPINRVYCVNRNLVATGDDDGVIKLWDPRQADSIRT), 135–174 (QHFDYISDFTYFDDKRQLVATSGDGHLSVIDIRSNKSTPL), 179–218 (DQEDELLSIVPIKGGQKAIVGSGLGILSVWNRQMGWADSV), 223–261 (GHPASIDAIVALTPDIIATGSEDGMIRVIQVLPHKFLGV), and 264–304 (THEE…EDSD). Residues 299–318 (LFEDSDEDDEMEEDEPDSDE) are compositionally biased toward acidic residues. The interval 299 to 348 (LFEDSDEDDEMEEDEPDSDEEKSKKKKKDNGMKDMSRGQAENDGSFFADL) is disordered.

Belongs to the WD repeat WDR55 family.

The protein resides in the nucleus. Its subcellular location is the nucleolus. The sequence is that of WD repeat-containing protein JIP5 (JIP5) from Cryptococcus neoformans var. neoformans serotype D (strain JEC21 / ATCC MYA-565) (Filobasidiella neoformans).